Reading from the N-terminus, the 190-residue chain is Translation initiation factor IF-3 (190 aa).

Belongs to the IF-3 family. As to quaternary structure, monomer.

It localises to the cytoplasm. Functionally, IF-3 binds to the 30S ribosomal subunit and shifts the equilibrium between 70S ribosomes and their 50S and 30S subunits in favor of the free subunits, thus enhancing the availability of 30S subunits on which protein synthesis initiation begins. This Prochlorococcus marinus subsp. pastoris (strain CCMP1986 / NIES-2087 / MED4) protein is Translation initiation factor IF-3.